Reading from the N-terminus, the 1043-residue chain is Desmoglein-1 (1043 aa).

The signal sequence occupies residues 1 to 23; sequence MNWPFFRAAVVLFIFLVVLEVNS. Residues 24–49 constitute a propeptide that is removed on maturation; the sequence is DFRIQVRDYNTKNGTIKWHSLRRQKR. Cadherin domains follow at residues 50–158, 159–270, 271–385, and 386–498; these read EWIK…PVFS, MSTF…PYME, LPTQ…GSVF, and RPGS…VNGS. At 50 to 551 the chain is on the extracellular side; the sequence is EWIKFAAACR…PLRDNVHFGP (502 aa). Asn-110 and Asn-180 each carry an N-linked (GlcNAc...) asparagine glycan. Asn-496 is a glycosylation site (N-linked (GlcNAc...) asparagine). The helical transmembrane segment at 552 to 572 threads the bilayer; the sequence is AGIGLLIMGFLVLGLVPFLLM. The Cytoplasmic segment spans residues 573–1043; that stretch reads CCDCGGAPGG…TKYSTVQYTK (471 aa). The tract at residues 770–807 is disordered; that stretch reads DVEPFPDSDPSWPPKSTEPVCPPQGTEPTGGGHPPISP. 5 Desmoglein repeat repeats span residues 819–845, 846–875, 876–905, 906–933, and 934–962; these read TYPSGPGVQHPTPIPDPLGYGNVTVTE, SYTSSGTLKPSVHIHDNRHASNVVVTERVV, GPISGADLQGMLEMPDLRDGSNVIVTERVI, APSSSLPTTLTIPDPRQSSNVVVTERVI, and QPTSGIVGNLSMHPELSNTHNVIVTERVV.

In terms of assembly, binds to JUP/plakoglobin. Interacts with PKP2. Interacts with DSC3; there is evidence to suggest that the interaction promotes cell-cell adhesion of keratinocytes. Expressed in the epidermis. Expressed in the muzzle epithelium.

The protein localises to the cell membrane. The protein resides in the cell junction. It is found in the desmosome. It localises to the cytoplasm. Its subcellular location is the nucleus. In terms of biological role, component of intercellular desmosome junctions. Involved in the interaction of plaque proteins and intermediate filaments mediating cell-cell adhesion. This chain is Desmoglein-1 (DSG1), found in Bos taurus (Bovine).